Consider the following 481-residue polypeptide: Tripartite motif-containing protein 10 (481 aa).

The RING-type zinc-finger motif lies at 16–61; that stretch reads CPICQGTLREPVTIDCGHNFCRACLTRYCEIPGPDLEESPTCPLCK. The segment at 94–135 adopts a B box-type zinc-finger fold; that stretch reads GEEDVCQEHGEKIYFFCEDDEMQLCVVCREAGEHATHTMRFL. Zn(2+)-binding residues include cysteine 99, histidine 102, cysteine 121, and histidine 127. Positions 150 to 177 form a coiled coil; that stretch reads LKCLRKEREEIQEIQSRENKRMQVLLTQ. The 190-residue stretch at 292-481 folds into the B30.2/SPRY domain; it reads REMKMFLEKL…GRGSSFSLSS (190 aa).

This sequence belongs to the TRIM/RBCC family. As to quaternary structure, interacts with IFNAR1; this interaction prevents association of IFNAR1 with TYK2.

The protein localises to the cytoplasm. Its function is as follows. E3 ligase that plays an essential role in the differentiation and survival of terminal erythroid cells. May directly bind to PTEN and promote its ubiquitination, resulting in its proteasomal degradation and activation of hypertrophic signaling. In addition, plays a role in immune response regulation by repressing the phosphorylation of STAT1 and STAT2 in the interferon/JAK/STAT signaling pathway independent of its E3 ligase activity. Mechanistically, interacts with the intracellular domain of IFNAR1 and thereby inhibits the association between TYK2 and IFNAR1. In Homo sapiens (Human), this protein is Tripartite motif-containing protein 10 (TRIM10).